The chain runs to 711 residues: Constitutive ornithine decarboxylase (711 aa).

Position 347 is an N6-(pyridoxal phosphate)lysine (lysine 347).

This sequence belongs to the Orn/Lys/Arg decarboxylase class-I family. It depends on pyridoxal 5'-phosphate as a cofactor.

It carries out the reaction L-ornithine + H(+) = putrescine + CO2. It functions in the pathway amine and polyamine biosynthesis; putrescine biosynthesis via L-ornithine pathway; putrescine from L-ornithine: step 1/1. The protein is Constitutive ornithine decarboxylase (speC) of Escherichia coli (strain K12).